A 446-amino-acid chain; its full sequence is Homocitrate synthase, mitochondrial (446 aa).

Positions 1–14 (MCATDNAPAANAAP) are enriched in low complexity. Residues 1–36 (MCATDNAPAANAAPEKPSNVGVEVGHTGEQTNPYGA) are disordered. One can recognise a Pyruvate carboxyltransferase domain in the interval 48–307 (FQLIESTLRE…HKLRDLENLV (260 aa)). Arg-56 lines the 2-oxoglutarate pocket. A Mg(2+)-binding site is contributed by Glu-57. 2-oxoglutarate-binding residues include His-116, Arg-176, and Thr-210. Positions 237 and 239 each coordinate Mg(2+). The active-site Proton acceptor is His-334. Residues 422-446 (TPTVAATEGPAVEDEPAAKKAKTEE) are disordered. A compositionally biased stretch (basic and acidic residues) spans 437-446 (PAAKKAKTEE).

This sequence belongs to the alpha-IPM synthase/homocitrate synthase family. Homocitrate synthase LYS20/LYS21 subfamily. It depends on Mg(2+) as a cofactor. Mn(2+) serves as cofactor.

The protein resides in the mitochondrion. The enzyme catalyses acetyl-CoA + 2-oxoglutarate + H2O = (2R)-homocitrate + CoA + H(+). It participates in amino-acid biosynthesis; L-lysine biosynthesis via AAA pathway; L-alpha-aminoadipate from 2-oxoglutarate: step 1/5. Catalyzes the aldol-type condensation of 2-oxoglutarate with acetyl-CoA to yield homocitrate. Carries out the first step of the alpha-aminoadipate (AAA) lysine biosynthesis pathway. In Yarrowia lipolytica (strain CLIB 122 / E 150) (Yeast), this protein is Homocitrate synthase, mitochondrial (LYS1).